A 501-amino-acid chain; its full sequence is Glutamyl-tRNA(Gln) amidotransferase subunit A (501 aa).

Residues Lys-80 and Ser-155 each act as charge relay system in the active site. Ser-179 acts as the Acyl-ester intermediate in catalysis.

The protein belongs to the amidase family. GatA subfamily. As to quaternary structure, heterotrimer of A, B and C subunits.

It catalyses the reaction L-glutamyl-tRNA(Gln) + L-glutamine + ATP + H2O = L-glutaminyl-tRNA(Gln) + L-glutamate + ADP + phosphate + H(+). Allows the formation of correctly charged Gln-tRNA(Gln) through the transamidation of misacylated Glu-tRNA(Gln) in organisms which lack glutaminyl-tRNA synthetase. The reaction takes place in the presence of glutamine and ATP through an activated gamma-phospho-Glu-tRNA(Gln). The chain is Glutamyl-tRNA(Gln) amidotransferase subunit A from Cupriavidus taiwanensis (strain DSM 17343 / BCRC 17206 / CCUG 44338 / CIP 107171 / LMG 19424 / R1) (Ralstonia taiwanensis (strain LMG 19424)).